The following is a 249-amino-acid chain: Small ribosomal subunit protein eS6 (249 aa).

A Glycyl lysine isopeptide (Lys-Gly) (interchain with G-Cter in SUMO2) cross-link involves residue Lys14. Glu35 is modified (ADP-ribosyl glutamic acid). A (3R)-3-hydroxyarginine modification is found at Arg137. Ser148 bears the Phosphoserine mark. An N6-acetyllysine modification is found at Lys211. Positions 217–229 (MKEAKEKRQEQIA) are enriched in basic and acidic residues. The interval 217–249 (MKEAKEKRQEQIAKRRRLSSLRASTSKSESSQK) is disordered. 2 positions are modified to phosphoserine; by RPS6KA1, RPS6KA3, DAPK1 and PASK: Ser235 and Ser236. Low complexity predominate over residues 236 to 249 (SLRASTSKSESSQK). Phosphoserine occurs at positions 240, 242, 244, and 247.

It belongs to the eukaryotic ribosomal protein eS6 family. Component of the small ribosomal subunit. Part of the small subunit (SSU) processome, composed of more than 70 proteins and the RNA chaperone small nucleolar RNA (snoRNA) U3. Ribosomal protein S6 is the major substrate of protein kinases in eukaryote ribosomes. The phosphorylation is stimulated by growth factors, tumor promoting agents, and mitogens. It is dephosphorylated at growth arrest. Phosphorylated at Ser-235 and Ser-236 by RPS6KA1 and RPS6KA3; phosphorylation at these sites facilitates the assembly of the pre-initiation complex. In terms of processing, specifically hydroxylated (with R stereochemistry) at C-3 of Arg-137 by KDM8. Post-translationally, mono-ADP-ribosylation at Glu-35 by PARP16 inhibits polysome assembly and mRNA loading, thereby inhibiting protein translation.

It localises to the cytoplasm. Its subcellular location is the nucleus. The protein resides in the nucleolus. Functionally, component of the 40S small ribosomal subunit. Plays an important role in controlling cell growth and proliferation through the selective translation of particular classes of mRNA. Part of the small subunit (SSU) processome, first precursor of the small eukaryotic ribosomal subunit. During the assembly of the SSU processome in the nucleolus, many ribosome biogenesis factors, an RNA chaperone and ribosomal proteins associate with the nascent pre-rRNA and work in concert to generate RNA folding, modifications, rearrangements and cleavage as well as targeted degradation of pre-ribosomal RNA by the RNA exosome. The sequence is that of Small ribosomal subunit protein eS6 (RPS6) from Bos taurus (Bovine).